The chain runs to 222 residues: DUF1769 family protein (222 aa).

It belongs to the UPF0590 family.

Its subcellular location is the cytoplasm. The protein resides in the nucleus. The chain is DUF1769 family protein from Schizosaccharomyces pombe (strain 972 / ATCC 24843) (Fission yeast).